The following is a 369-amino-acid chain: Trichocyst matrix protein T1-B (369 aa).

The N-terminal stretch at 1–16 is a signal peptide; the sequence is MYKLAVCTLLILSVTA. A propeptide spanning residues 17–55 is cleaved from the precursor; that stretch reads IDVTNSVWTSHDQKAFAQIKQSGWGNFILNFGELHLQTG. A coiled-coil region spans residues 56–180; it reads GILAELNTEI…AIDESLQLLS (125 aa). The propeptide occupies 190–225; that stretch reads IQKVQKNLTKIQQSLKRHSTFQTFIKTLLEIAVEAN. Positions 262–354 form a coiled coil; sequence KDFEARVIQL…AHQALDLLNQ (93 aa).

This sequence belongs to the TMP family. In terms of processing, two components are produced by post-translational processing from the precursor peptide.

The protein resides in the trichocyst. In terms of biological role, structural protein that crystallize inside the trichocyst matrix. This is Trichocyst matrix protein T1-B (T1B) from Paramecium tetraurelia.